We begin with the raw amino-acid sequence, 482 residues long: Ribosomal protein S6 kinase beta-2 (482 aa).

Residues 1 to 26 (MAAVFDLDLETEEGSEGEGEPELSPA) form a disordered region. A compositionally biased stretch (acidic residues) spans 7–21 (LDLETEEGSEGEGEP). Ser15 is subject to Phosphoserine. Residues 67–328 (FELLRVLGKG…AADVQRHPFF (262 aa)) enclose the Protein kinase domain. ATP contacts are provided by residues 73–81 (LGKGGYGKV) and Lys99. Asp194 functions as the Proton acceptor in the catalytic mechanism. An AGC-kinase C-terminal domain is found at 329–399 (RHMNWDDLLA…VAPSVLDSIK (71 aa)). The tract at residues 407-482 (KLRSPRRLNS…SKRGRGRPGR (76 aa)) is disordered. A phosphoserine mark is found at Ser417 and Ser423. Pro residues predominate over residues 437–466 (PSLPEPTELPLPPLLPPPPPSTTAPLPIRP). The short motif at 471 to 477 (KKSKRGR) is the Nuclear localization signal element. Basic residues predominate over residues 471–482 (KKSKRGRGRPGR). Ser473 carries the post-translational modification Phosphoserine; by PKC.

Belongs to the protein kinase superfamily. AGC Ser/Thr protein kinase family. S6 kinase subfamily. Phosphorylated and activated by MTOR. Phosphorylation by PKC within the NLS in response to mitogenic stimuli causes cytoplasmic retention.

Its subcellular location is the cytoplasm. It localises to the nucleus. It catalyses the reaction L-seryl-[protein] + ATP = O-phospho-L-seryl-[protein] + ADP + H(+). The catalysed reaction is L-threonyl-[protein] + ATP = O-phospho-L-threonyl-[protein] + ADP + H(+). In terms of biological role, phosphorylates specifically ribosomal protein S6. Seems to act downstream of mTOR signaling in response to growth factors and nutrients to promote cell proliferation, cell growth and cell cycle progression in an alternative pathway regulated by MEAK7. This chain is Ribosomal protein S6 kinase beta-2 (RPS6KB2), found in Homo sapiens (Human).